The sequence spans 1241 residues: ATP-dependent helicase/nuclease subunit A (1241 aa).

A UvrD-like helicase ATP-binding domain is found at 12–485 (SQWTDDQWKA…IDLAKNFRSR (474 aa)). Residue 33-40 (AAAGSGKT) participates in ATP binding. Residues 505-805 (GEIDYDADAE…RIMTIHKSKG (301 aa)) enclose the UvrD-like helicase C-terminal domain.

It belongs to the helicase family. AddA subfamily. Heterodimer of AddA and AddB/RexB. It depends on Mg(2+) as a cofactor.

It carries out the reaction Couples ATP hydrolysis with the unwinding of duplex DNA by translocating in the 3'-5' direction.. It catalyses the reaction ATP + H2O = ADP + phosphate + H(+). Functionally, the heterodimer acts as both an ATP-dependent DNA helicase and an ATP-dependent, dual-direction single-stranded exonuclease. Recognizes the chi site generating a DNA molecule suitable for the initiation of homologous recombination. The AddA nuclease domain is required for chi fragment generation; this subunit has the helicase and 3' -&gt; 5' nuclease activities. The polypeptide is ATP-dependent helicase/nuclease subunit A (Bacillus cereus (strain B4264)).